A 250-amino-acid chain; its full sequence is Type III pantothenate kinase (250 aa).

6 to 13 serves as a coordination point for ATP; sequence DVGNTNTV. Residue 103-106 participates in substrate binding; it reads GADR. The active-site Proton acceptor is the Asp-105. Residue Asp-125 coordinates K(+). Thr-128 is an ATP binding site. Residue Thr-180 coordinates substrate.

The protein belongs to the type III pantothenate kinase family. Homodimer. The cofactor is NH4(+). K(+) is required as a cofactor.

The protein localises to the cytoplasm. It carries out the reaction (R)-pantothenate + ATP = (R)-4'-phosphopantothenate + ADP + H(+). It functions in the pathway cofactor biosynthesis; coenzyme A biosynthesis; CoA from (R)-pantothenate: step 1/5. In terms of biological role, catalyzes the phosphorylation of pantothenate (Pan), the first step in CoA biosynthesis. This is Type III pantothenate kinase from Frankia casuarinae (strain DSM 45818 / CECT 9043 / HFP020203 / CcI3).